The chain runs to 401 residues: Alternative oxidase, mitochondrial (401 aa).

The interval Lys53 to Val81 is disordered. The chain crosses the membrane as a helical span at residues Leu184–Leu204. Fe cation is bound by residues Glu191, Glu230, and His233. The helical transmembrane segment at Ala249 to Ser269 threads the bilayer. Fe cation is bound by residues Glu281, Glu282, Glu335, and His338.

Belongs to the alternative oxidase family. Fe cation is required as a cofactor.

It is found in the mitochondrion inner membrane. Catalyzes cyanide-resistant oxygen consumption. May increase respiration when the cytochrome respiratory pathway is restricted, or in response to low temperatures. This Cryptococcus neoformans var. grubii serotype A (strain H99 / ATCC 208821 / CBS 10515 / FGSC 9487) (Filobasidiella neoformans var. grubii) protein is Alternative oxidase, mitochondrial (AOX1).